The chain runs to 316 residues: Pantothenate kinase (316 aa).

Position 95 to 102 (G95 to S102) interacts with ATP.

The protein belongs to the prokaryotic pantothenate kinase family.

Its subcellular location is the cytoplasm. The catalysed reaction is (R)-pantothenate + ATP = (R)-4'-phosphopantothenate + ADP + H(+). The protein operates within cofactor biosynthesis; coenzyme A biosynthesis; CoA from (R)-pantothenate: step 1/5. This chain is Pantothenate kinase, found in Shewanella oneidensis (strain ATCC 700550 / JCM 31522 / CIP 106686 / LMG 19005 / NCIMB 14063 / MR-1).